The following is a 1138-amino-acid chain: Tyrosine-protein kinase receptor Tie-1 (1138 aa).

An N-terminal signal peptide occupies residues 1–21; the sequence is MVWRVPPFLLPILFLASHVGA. Over 22–759 the chain is Extracellular; the sequence is AVDLTLLANL…SRAAEEGLDQ (738 aa). Residues 43 to 105 enclose the Ig-like C2-type 1 domain; that stretch reads CVSGEAGAGR…PSDLVGVFSC (63 aa). N-linked (GlcNAc...) asparagine glycosylation is found at Asn83 and Asn161. EGF-like domains lie at 214–256, 258–303, and 305–345; these read GCGA…TRCE, ACRE…SQCQ, and ACAP…VHCE. Disulfide bonds link Cys228–Cys237, Cys231–Cys244, and Cys246–Cys255. 3 cysteine pairs are disulfide-bonded: Cys315–Cys327, Cys321–Cys333, and Cys335–Cys344. In terms of domain architecture, Ig-like C2-type 2 spans 372–426; the sequence is CAAAGNPFPVRGSIELRKPDGTVLLSTKAIVEPEKTTAEFEVPRLVLADSGFWEC. Fibronectin type-III domains are found at residues 446-545, 548-642, and 646-739; these read PPVP…CPEP, QPWL…LPPS, and APRH…TLGN. N-linked (GlcNAc...) asparagine glycans are attached at residues Asn503, Asn596, and Asn709. Residues 760–784 traverse the membrane as a helical segment; the sequence is QLILAVVGSVSATCLTILAALLTLV. Residues 785 to 1138 are Cytoplasmic-facing; the sequence is CIRRSCLHRR…AGIDATAEEA (354 aa). The region spanning 839-1118 is the Protein kinase domain; sequence ITFEDLIGEG…RMLEARKAYV (280 aa). Residues 845-853 and Lys870 contribute to the ATP site; that span reads IGEGNFGQV. The active-site Proton acceptor is the Asp979. Residue Tyr1007 is modified to Phosphotyrosine; by autocatalysis.

This sequence belongs to the protein kinase superfamily. Tyr protein kinase family. Tie subfamily. In terms of assembly, heterodimer with TEK/TIE2. Interacts with SVEP1 (via C-terminus). Phosphorylated on tyrosine residues in response to ANGPT1, most likely by TEK/TIE2. Specifically expressed in developing vascular endothelial cells.

Its subcellular location is the cell membrane. The catalysed reaction is L-tyrosyl-[protein] + ATP = O-phospho-L-tyrosyl-[protein] + ADP + H(+). In terms of biological role, transmembrane tyrosine-protein kinase that may modulate TEK/TIE2 activity and contribute to the regulation of angiogenesis. In Homo sapiens (Human), this protein is Tyrosine-protein kinase receptor Tie-1 (TIE1).